We begin with the raw amino-acid sequence, 885 residues long: Alanine--tRNA ligase (885 aa).

Zn(2+) contacts are provided by H564, H568, C676, and H680.

It belongs to the class-II aminoacyl-tRNA synthetase family. The cofactor is Zn(2+).

Its subcellular location is the cytoplasm. It carries out the reaction tRNA(Ala) + L-alanine + ATP = L-alanyl-tRNA(Ala) + AMP + diphosphate. Its function is as follows. Catalyzes the attachment of alanine to tRNA(Ala) in a two-step reaction: alanine is first activated by ATP to form Ala-AMP and then transferred to the acceptor end of tRNA(Ala). Also edits incorrectly charged Ser-tRNA(Ala) and Gly-tRNA(Ala) via its editing domain. The polypeptide is Alanine--tRNA ligase (Brucella anthropi (strain ATCC 49188 / DSM 6882 / CCUG 24695 / JCM 21032 / LMG 3331 / NBRC 15819 / NCTC 12168 / Alc 37) (Ochrobactrum anthropi)).